A 475-amino-acid polypeptide reads, in one-letter code: NADH-ubiquinone oxidoreductase chain 2 (475 aa).

The next 13 helical transmembrane spans lie at 45–65 (LAVLALSFVAYLAWESIGIQY), 82–102 (APIVLLLIILVITLLVYLTTT), 112–132 (IALLMLVNLIGLILFPMVNDL), 133–153 (IPLYVIIELQSYSLYLLTGVY), 162–182 (AAILYFVTGGIASVLILLSSA), 198–220 (TYYSISGINTWTSFDILLIALVF), 240–260 (LYITAYISIVAKVSIMSFIYL), 262–282 (IHLFSTQLLILAFYLSVAVAA), 291–311 (IKSILAYSGILNFGYLLTAVL), 318–338 (YIYIIQYSLTHVTIFLCILAI), 365–385 (LCIALIVCLFSLIGIPPLPGF), 402–422 (LEALTIIVFSVIATYYYAYII), and 447–467 (FIISILMVILITFYMYLPTLL).

Belongs to the complex I subunit 2 family.

Its subcellular location is the mitochondrion inner membrane. The enzyme catalyses a ubiquinone + NADH + 5 H(+)(in) = a ubiquinol + NAD(+) + 4 H(+)(out). Its function is as follows. Core subunit of the mitochondrial membrane respiratory chain NADH dehydrogenase (Complex I) that is believed to belong to the minimal assembly required for catalysis. Complex I functions in the transfer of electrons from NADH to the respiratory chain. The immediate electron acceptor for the enzyme is believed to be ubiquinone. The polypeptide is NADH-ubiquinone oxidoreductase chain 2 (NAD2) (Candida albicans (strain SC5314 / ATCC MYA-2876) (Yeast)).